A 759-amino-acid polypeptide reads, in one-letter code: uncharacterized protein (759 aa).

Composition is skewed to low complexity over residues 1–36 (MSSN…NETN), 142–211 (QQQN…NQHH), and 221–347 (NHSN…GSSS). 5 disordered regions span residues 1–47 (MSSN…AQTP), 142–380 (QQQN…PSIG), 409–428 (NNNC…GLGY), 463–504 (IING…NFEN), and 654–759 (LVDD…YLNK). Polar residues predominate over residues 348 to 360 (PFQDQARSPSSSF). 2 stretches are compositionally biased toward low complexity: residues 463–495 (IING…GNNN) and 660–747 (HISN…DNNN).

This is an uncharacterized protein from Dictyostelium discoideum (Social amoeba).